We begin with the raw amino-acid sequence, 331 residues long: Ketol-acid reductoisomerase (NADP(+)) (331 aa).

The KARI N-terminal Rossmann domain maps to 2-182 (AQLFYDSDAD…GGTRAGILET (181 aa)). Residues 25-28 (YGSQ), serine 51, serine 53, and 83-86 (DEFQ) each bind NADP(+). Histidine 108 is a catalytic residue. Glycine 134 contributes to the NADP(+) binding site. Positions 183-328 (NFKEETETDL…KGLRAMFSWL (146 aa)) constitute a KARI C-terminal knotted domain. Mg(2+) contacts are provided by aspartate 191, glutamate 195, glutamate 227, and glutamate 231. Serine 252 is a substrate binding site.

Belongs to the ketol-acid reductoisomerase family. The cofactor is Mg(2+).

It carries out the reaction (2R)-2,3-dihydroxy-3-methylbutanoate + NADP(+) = (2S)-2-acetolactate + NADPH + H(+). The enzyme catalyses (2R,3R)-2,3-dihydroxy-3-methylpentanoate + NADP(+) = (S)-2-ethyl-2-hydroxy-3-oxobutanoate + NADPH + H(+). Its pathway is amino-acid biosynthesis; L-isoleucine biosynthesis; L-isoleucine from 2-oxobutanoate: step 2/4. It participates in amino-acid biosynthesis; L-valine biosynthesis; L-valine from pyruvate: step 2/4. Involved in the biosynthesis of branched-chain amino acids (BCAA). Catalyzes an alkyl-migration followed by a ketol-acid reduction of (S)-2-acetolactate (S2AL) to yield (R)-2,3-dihydroxy-isovalerate. In the isomerase reaction, S2AL is rearranged via a Mg-dependent methyl migration to produce 3-hydroxy-3-methyl-2-ketobutyrate (HMKB). In the reductase reaction, this 2-ketoacid undergoes a metal-dependent reduction by NADPH to yield (R)-2,3-dihydroxy-isovalerate. In Prochlorococcus marinus (strain MIT 9303), this protein is Ketol-acid reductoisomerase (NADP(+)).